A 1444-amino-acid chain; its full sequence is RNA-directed RNA polymerase P1 (1444 aa).

A disordered region spans residues 157 to 181; that stretch reads EEIQMDESQSDKRRRKKRMEKSRPV. Positions 690-897 constitute a RdRp catalytic domain; sequence LGVGFATLYQ…KTVISHISGE (208 aa).

This sequence belongs to the reoviridae RNA-directed RNA polymerase family.

It localises to the virion. It is found in the host cytoplasm. The catalysed reaction is RNA(n) + a ribonucleoside 5'-triphosphate = RNA(n+1) + diphosphate. In terms of biological role, RNA-directed RNA polymerase that is involved in both transcription and genome replication. Together with the capping enzyme P5 and protein P7, forms an enzyme complex positioned near the channels situated at each of the five-fold vertices of the core. The sequence is that of RNA-directed RNA polymerase P1 from Rice dwarf virus (isolate Akita) (RDV).